We begin with the raw amino-acid sequence, 932 residues long: Leucine--tRNA ligase (932 aa).

Positions 38–48 (PYLNGNLHAGH) match the 'HIGH' region motif. The 'KMSKS' region motif lies at 630-634 (KMSKS). Lysine 633 contributes to the ATP binding site.

This sequence belongs to the class-I aminoacyl-tRNA synthetase family.

It localises to the cytoplasm. It carries out the reaction tRNA(Leu) + L-leucine + ATP = L-leucyl-tRNA(Leu) + AMP + diphosphate. The protein is Leucine--tRNA ligase of Archaeoglobus fulgidus (strain ATCC 49558 / DSM 4304 / JCM 9628 / NBRC 100126 / VC-16).